A 495-amino-acid chain; its full sequence is uncharacterized protein (495 aa).

The TRAM domain maps to 16–74 (SSKRGDLIELAVTALDEDGNGIGTHDGTNVHVIGALPDERVRARLTHVGKRHLHAEAVE). 4 residues coordinate [4Fe-4S] cluster: Cys88, Cys94, Cys97, and Cys175. Gln299, Tyr328, Glu349, and Asn397 together coordinate S-adenosyl-L-methionine. Cys424 (nucleophile) is an active-site residue. Basic and acidic residues predominate over residues 472 to 483 (DRLESPAKERSR). Residues 472 to 495 (DRLESPAKERSRPRASHKAKGGAV) form a disordered region. Residues 484-495 (PRASHKAKGGAV) are compositionally biased toward basic residues.

The protein belongs to the class I-like SAM-binding methyltransferase superfamily. RNA M5U methyltransferase family.

This is an uncharacterized protein from Geobacter sulfurreducens (strain ATCC 51573 / DSM 12127 / PCA).